The sequence spans 375 residues: Adiponectin receptor protein 1 (375 aa).

The interval 1-60 (MSSHKGSVVAQGNGAPASNREADTVELAELGPLLEEKGKRVIANPPKAEEEQTCPVPQEE) is disordered. Topologically, residues 1 to 136 (MSSHKGSVVA…SIFRIHTETG (136 aa)) are cytoplasmic. A helical membrane pass occupies residues 137–157 (NIWTHLLGFVLFLFLGILTML). Topologically, residues 158–170 (RPNMYFMAPLQEK) are extracellular. A helical membrane pass occupies residues 171-191 (VVFGMFFLGAVLCLSFSWLFH). Position 191 (H191) interacts with Zn(2+). Topologically, residues 192–203 (TVYCHSEKVSRT) are cytoplasmic. Residues 204–224 (FSKLDYSGIALLIMGSFVPWL) form a helical membrane-spanning segment. At 225–234 (YYSFYCSPQP) the chain is on the extracellular side. Residues 235 to 255 (RLIYLSIVCVLGISAIIVAQW) traverse the membrane as a helical segment. The Cytoplasmic segment spans residues 256–264 (DRFATPKHR). Residues 265 to 285 (QTRAGVFLGLGLSGVVPTMHF) traverse the membrane as a helical segment. Residues 286–298 (TIAEGFVKATTVG) lie on the Extracellular side of the membrane. The helical transmembrane segment at 299–319 (QMGWFFLMAVMYITGAGLYAA) threads the bilayer. Over 320-337 (RIPERFFPGKFDIWFQSH) the chain is Cytoplasmic. Zn(2+) is bound by residues H337 and H341. Residues 338–358 (QIFHVLVVAAAFVHFYGVSNL) traverse the membrane as a helical segment. Residues 359-375 (QEFRYGLEGGCTDDTLL) lie on the Extracellular side of the membrane.

Belongs to the ADIPOR family. As to quaternary structure, may form homooligomers and heterooligomers with ADIPOR2. Interacts with APPL2 (via BAR domain); hinders the accessibility of APPL1 to ADIPOR1; negatively regulates adiponectin signaling; ADIPOQ dissociates this interaction and facilitates the recruitment of APPL1 to ADIPOR1. Interacts with APPL1; ADIPOQ enhances this interaction; inhibites adiponectin-stimulated binding of APPL2 to ADIPOR1. In terms of tissue distribution, widely expressed. Highly expressed in heart and skeletal muscle. Expressed at intermediate level in brain, spleen, kidney, liver, placenta, lung and peripheral blood leukocytes. Weakly expressed in colon, thymus and small intestine.

The protein localises to the cell membrane. Receptor for ADIPOQ, an essential hormone secreted by adipocytes that regulates glucose and lipid metabolism. Required for normal glucose and fat homeostasis and for maintaining a normal body weight. ADIPOQ-binding activates a signaling cascade that leads to increased AMPK activity, and ultimately to increased fatty acid oxidation, increased glucose uptake and decreased gluconeogenesis. Has high affinity for globular adiponectin and low affinity for full-length adiponectin. In Homo sapiens (Human), this protein is Adiponectin receptor protein 1.